Consider the following 184-residue polypeptide: ADP-ribosylation factor-like protein 2 (184 aa).

A lipid anchor (N-myristoyl glycine) is attached at Gly2. GTP contacts are provided by residues 23–30, 66–70, Gly68, and 125–128; these read GLDNAGKT, DVGGQ, and NKSD.

The protein belongs to the small GTPase superfamily. Arf family.

It is found in the cytoplasm. It localises to the cell membrane. Its subcellular location is the cytoskeleton. The protein resides in the microtubule organizing center. The protein localises to the centrosome. Its function is as follows. GTP-binding protein that functions in embryogenesis, cytokinesis, germline development and microtubulule cytoskeleton dynamics. The polypeptide is ADP-ribosylation factor-like protein 2 (evl-20.1) (Caenorhabditis briggsae).